A 778-amino-acid polypeptide reads, in one-letter code: Degenerin deg-1 (778 aa).

Over 1 to 82 (MSNHHSKTKK…IARNSFSKLM (82 aa)) the chain is Cytoplasmic. A helical transmembrane segment spans residues 83 to 103 (WGLIIFSFLLMFAYQASKLIF). At 104–711 (KFSAHEKITD…LVNLIADFGG (608 aa)) the chain is on the extracellular side. Residues 154 to 165 (NAKTHSKSEGEK) are compositionally biased toward basic and acidic residues. 2 disordered regions span residues 154–180 (NAKTHSKSEGEKKKPKVSRKQHSDASQ) and 201–220 (SNKTLQSQNKSGRRRSQRSI). N-linked (GlcNAc...) asparagine glycosylation is found at asparagine 202, asparagine 209, asparagine 272, and asparagine 342. The segment covering 346–369 (TSTTTTTTTTPPPTTTSTTTTTTT) has biased composition (low complexity). The segment at 346–380 (TSTTTTTTTTPPPTTTSTTTTTTTTPPPTTTARPN) is disordered. 3 N-linked (GlcNAc...) asparagine glycosylation sites follow: asparagine 473, asparagine 492, and asparagine 606. A helical transmembrane segment spans residues 712-732 (HLGLWLGFSVITVMEVCVLLV). At 733–778 (DMISLFFKSRHEEKLLRQSTKRKDVPEDKRQITVGSGRKSDAFVSI) the chain is on the cytoplasmic side.

The protein belongs to the amiloride-sensitive sodium channel (TC 1.A.6) family.

It is found in the membrane. In terms of biological role, probable sodium channel subunit. Required by a subset of neurons. This chain is Degenerin deg-1, found in Caenorhabditis elegans.